The following is a 217-amino-acid chain: MOB kinase activator-like 2 (217 aa).

The disordered stretch occupies residues 15–38 (GKESIRGNYKPKKHPRGSSRHTMR). The segment covering 23–38 (YKPKKHPRGSSRHTMR) has biased composition (basic residues). 4 residues coordinate Zn(2+): cysteine 89, cysteine 94, histidine 167, and histidine 172.

Belongs to the MOB1/phocein family.

The chain is MOB kinase activator-like 2 (mob2) from Dictyostelium discoideum (Social amoeba).